A 286-amino-acid chain; its full sequence is Pantothenate synthetase (286 aa).

Residue Met-30–His-37 participates in ATP binding. The active-site Proton donor is the His-37. Position 61 (Gln-61) interacts with (R)-pantoate. Gln-61 serves as a coordination point for beta-alanine. Gly-148–Asp-151 provides a ligand contact to ATP. (R)-pantoate is bound at residue Gln-154. Residues Val-177 and Leu-185–Arg-188 each bind ATP.

Belongs to the pantothenate synthetase family. Homodimer.

Its subcellular location is the cytoplasm. It catalyses the reaction (R)-pantoate + beta-alanine + ATP = (R)-pantothenate + AMP + diphosphate + H(+). It functions in the pathway cofactor biosynthesis; (R)-pantothenate biosynthesis; (R)-pantothenate from (R)-pantoate and beta-alanine: step 1/1. Its function is as follows. Catalyzes the condensation of pantoate with beta-alanine in an ATP-dependent reaction via a pantoyl-adenylate intermediate. The sequence is that of Pantothenate synthetase from Psychrobacter sp. (strain PRwf-1).